We begin with the raw amino-acid sequence, 535 residues long: T-complex protein 1 subunit zeta 1 (535 aa).

Belongs to the TCP-1 chaperonin family. Heterooligomeric complex of about 850 to 900 kDa that forms two stacked rings, 12 to 16 nm in diameter.

It localises to the cytoplasm. Functionally, molecular chaperone; assists the folding of proteins upon ATP hydrolysis. Known to play a role, in vitro, in the folding of actin and tubulin. The chain is T-complex protein 1 subunit zeta 1 from Arabidopsis thaliana (Mouse-ear cress).